The primary structure comprises 102 residues: Small ribosomal subunit protein uS10 (102 aa).

Belongs to the universal ribosomal protein uS10 family. Part of the 30S ribosomal subunit.

In terms of biological role, involved in the binding of tRNA to the ribosomes. The polypeptide is Small ribosomal subunit protein uS10 (Mesoplasma florum (strain ATCC 33453 / NBRC 100688 / NCTC 11704 / L1) (Acholeplasma florum)).